We begin with the raw amino-acid sequence, 439 residues long: Adenylosuccinate synthetase (439 aa).

GTP is bound by residues 25–31, 53–55, and Lys-62; these read GDEGKGK and GHT. Residue Asp-26 is the Proton acceptor of the active site. 2 residues coordinate Mg(2+): Asp-26 and Gly-53. Residues 26 to 29 and 51 to 54 contribute to the IMP site; these read DEGK and NAGH. The active-site Proton donor is His-54. 4 residues coordinate IMP: Thr-141, Arg-155, Asn-232, and Thr-247. Position 307 (Thr-307) interacts with GTP. 307-313 contributes to the substrate binding site; sequence TTTNRPR. Arg-311 lines the IMP pocket. Residues Arg-313, 339–341, and 425–427 each bind GTP; these read KLD and GVG.

Belongs to the adenylosuccinate synthetase family. In terms of assembly, homodimer. The cofactor is Mg(2+).

Its subcellular location is the cytoplasm. It catalyses the reaction IMP + L-aspartate + GTP = N(6)-(1,2-dicarboxyethyl)-AMP + GDP + phosphate + 2 H(+). The protein operates within purine metabolism; AMP biosynthesis via de novo pathway; AMP from IMP: step 1/2. Plays an important role in the salvage pathway for purine nucleotide biosynthesis. Catalyzes the first committed step in the biosynthesis of AMP from IMP. The sequence is that of Adenylosuccinate synthetase from Plasmodium yoelii yoelii.